The chain runs to 209 residues: uncharacterized protein (209 aa).

Residues 1 to 17 (MKKLVTGLLALSLFLAA) form the signal peptide. The disordered stretch occupies residues 17–106 (ACGQDSDQQK…SGQTTNNQKS (90 aa)). Cys-18 is lipidated: N-palmitoyl cysteine. Cys-18 carries the S-diacylglycerol cysteine lipid modification. The span at 23–70 (DQQKDSNKEKDDKAKTEQQDKKTNDSSKDKKDNKDDSKDVNKDNKDNS) shows a compositional bias: basic and acidic residues. Over residues 71-106 (ANDNQQQSNSNATNNDQNQTNNNQSNSGQTTNNQKS) the composition is skewed to low complexity.

The protein resides in the cell membrane. This is an uncharacterized protein from Staphylococcus aureus (strain MRSA252).